Reading from the N-terminus, the 206-residue chain is Synaptosomal-associated protein 25 (206 aa).

A compositionally biased stretch (basic and acidic residues) spans 1-20; it reads MAEDADMRNELEEMQRRADQ. The interval 1 to 23 is disordered; it reads MAEDADMRNELEEMQRRADQLAD. The t-SNARE coiled-coil homology 1 domain occupies 19-81; that stretch reads DQLADESLES…KEAEKNLTDL (63 aa). Residues Cys-85, Cys-88, Cys-90, and Cys-92 are each lipidated (S-palmitoyl cysteine). A Phosphothreonine modification is found at Thr-138. The region spanning 140 to 202 is the t-SNARE coiled-coil homology 2 domain; the sequence is DARENEMDEN…DEANQRATKM (63 aa). At Ser-187 the chain carries Phosphoserine.

It belongs to the SNAP-25 family. In terms of assembly, part of the SNARE core complex containing SNAP25, VAMP2 and STX1A. This complex binds CPLX1. Interacts with TRIM9, RIMS1 and SNAPIN. Binds STXBP6. Found in a ternary complex with STX1A and VAMP8. Associates with the BLOC-1 complex. Isoform 1 and isoform 2 interact with BLOC1S6. Interacts with alpha-synuclein/SNCA. Post-translationally, palmitoylated. Cys-85 appears to be the main site, and palmitoylation is required for membrane association.

The protein resides in the membrane. It is found in the synapse. The protein localises to the synaptosome. It localises to the cell membrane. In terms of biological role, t-SNARE involved in the molecular regulation of neurotransmitter release. May play an important role in the synaptic function of specific neuronal systems. Associates with proteins involved in vesicle docking and membrane fusion. The chain is Synaptosomal-associated protein 25 (SNAP25) from Gallus gallus (Chicken).